Here is a 367-residue protein sequence, read N- to C-terminus: Tetraacyldisaccharide 4'-kinase (367 aa).

V68–T75 provides a ligand contact to ATP.

Belongs to the LpxK family.

It carries out the reaction a lipid A disaccharide + ATP = a lipid IVA + ADP + H(+). The protein operates within glycolipid biosynthesis; lipid IV(A) biosynthesis; lipid IV(A) from (3R)-3-hydroxytetradecanoyl-[acyl-carrier-protein] and UDP-N-acetyl-alpha-D-glucosamine: step 6/6. Functionally, transfers the gamma-phosphate of ATP to the 4'-position of a tetraacyldisaccharide 1-phosphate intermediate (termed DS-1-P) to form tetraacyldisaccharide 1,4'-bis-phosphate (lipid IVA). The polypeptide is Tetraacyldisaccharide 4'-kinase (Chlamydia abortus (strain DSM 27085 / S26/3) (Chlamydophila abortus)).